The chain runs to 403 residues: Imidazolonepropionase (403 aa).

Fe(3+) contacts are provided by H68 and H70. The Zn(2+) site is built by H68 and H70. Residues R77, Y140, and H173 each contribute to the 4-imidazolone-5-propanoate site. Y140 contributes to the N-formimidoyl-L-glutamate binding site. Fe(3+) is bound at residue H238. H238 contributes to the Zn(2+) binding site. Position 241 (Q241) interacts with 4-imidazolone-5-propanoate. D313 is a Fe(3+) binding site. D313 is a Zn(2+) binding site. N-formimidoyl-L-glutamate contacts are provided by N315 and G317. A 4-imidazolone-5-propanoate-binding site is contributed by T318.

It belongs to the metallo-dependent hydrolases superfamily. HutI family. It depends on Zn(2+) as a cofactor. Fe(3+) is required as a cofactor.

Its subcellular location is the cytoplasm. It carries out the reaction 4-imidazolone-5-propanoate + H2O = N-formimidoyl-L-glutamate. It participates in amino-acid degradation; L-histidine degradation into L-glutamate; N-formimidoyl-L-glutamate from L-histidine: step 3/3. Catalyzes the hydrolytic cleavage of the carbon-nitrogen bond in imidazolone-5-propanoate to yield N-formimidoyl-L-glutamate. It is the third step in the universal histidine degradation pathway. This Psychromonas ingrahamii (strain DSM 17664 / CCUG 51855 / 37) protein is Imidazolonepropionase.